Reading from the N-terminus, the 365-residue chain is L-lactate oxidase (365 aa).

An FMN hydroxy acid dehydrogenase domain is found at 6 to 365 (RIPPGVWNAI…ITHDTLTPSC (360 aa)). Position 32 (Tyr32) interacts with pyruvate. Residues 85–87 (PVA), Ser114, and Gln135 each bind FMN. A pyruvate-binding site is contributed by Tyr137. The FMN site is built by Thr163, Lys237, and Ser259. 2 residues coordinate pyruvate: His261 and Arg264. Catalysis depends on His261, which acts as the Proton acceptor. Residues 292-296 (DGGVR) and Arg316 each bind FMN.

The protein belongs to the FMN-dependent alpha-hydroxy acid dehydrogenase family. Homotetramer. It depends on FMN as a cofactor.

It carries out the reaction (S)-lactate + O2 = pyruvate + H2O2. The catalysed reaction is glycolate + O2 = glyoxylate + H2O2. In terms of biological role, catalyzes the oxidation of (S)-lactate (L-lactate) to pyruvate, with a reduction of O2 to H2O2. To a lesser extent is also able to use glycolate as substrate. In Alicycliphilus denitrificans (strain DSM 14773 / CIP 107495 / K601), this protein is L-lactate oxidase.